A 607-amino-acid polypeptide reads, in one-letter code: Elongation factor 4 (607 aa).

The tr-type G domain maps to 11 to 193 (EKIRNFSIIA…QIVEKVPAPT (183 aa)). Residues 23-28 (DHGKST) and 140-143 (NKID) contribute to the GTP site.

It belongs to the TRAFAC class translation factor GTPase superfamily. Classic translation factor GTPase family. LepA subfamily.

It localises to the cell membrane. The enzyme catalyses GTP + H2O = GDP + phosphate + H(+). Its function is as follows. Required for accurate and efficient protein synthesis under certain stress conditions. May act as a fidelity factor of the translation reaction, by catalyzing a one-codon backward translocation of tRNAs on improperly translocated ribosomes. Back-translocation proceeds from a post-translocation (POST) complex to a pre-translocation (PRE) complex, thus giving elongation factor G a second chance to translocate the tRNAs correctly. Binds to ribosomes in a GTP-dependent manner. The sequence is that of Elongation factor 4 from Streptococcus pneumoniae (strain P1031).